We begin with the raw amino-acid sequence, 244 residues long: Myrosinase MB1 (244 aa).

N-linked (GlcNAc...) asparagine glycosylation is present at Asn32. Position 51 (Tyr51) interacts with substrate. The active-site Nucleophile is Glu125. Substrate contacts are provided by residues Trp173 and 180-181; that span reads EF. A glycan (N-linked (GlcNAc...) asparagine) is linked at Asn216.

This sequence belongs to the glycosyl hydrolase 1 family. Homodimer. As to expression, in vacuoles called myrosin grains of a certain class of cells, myrosin cells, distributed in the cotyledons and the axis of the embryo as well as in different organs of the growing plant.

The protein localises to the vacuole. It catalyses the reaction a thioglucoside + H2O = a sugar + a thiol.. Functionally, degradation of glucosinolates (glucose residue linked by a thioglucoside bound to an amino acid derivative) to glucose, sulfate and any of the products: thiocyanates, isothiocyanates, nitriles, epithionitriles or oxazolidine-2-thiones. The protein is Myrosinase MB1 of Sinapis alba (White mustard).